A 52-amino-acid chain; its full sequence is MFNVRVNVTLACTECGDRNYITTKNKRNNPERIEMKKYCPRLNKYTLHRETK.

Belongs to the bacterial ribosomal protein bL33 family.

The protein is Large ribosomal subunit protein bL33A of Staphylococcus aureus (strain USA300).